Here is a 342-residue protein sequence, read N- to C-terminus: Holliday junction branch migration complex subunit RuvB (342 aa).

The large ATPase domain (RuvB-L) stretch occupies residues 1–182 (MRIEALNTAP…FGINSRLDYY (182 aa)). Residues I21, R22, G63, K66, T67, T68, 129-131 (EDY), R172, Y182, and R219 contribute to the ATP site. T67 lines the Mg(2+) pocket. A small ATPAse domain (RuvB-S) region spans residues 183–253 (SPELLQSIIV…VARRTLESLE (71 aa)). The head domain (RuvB-H) stretch occupies residues 256–342 (EGGLDDMDKK…DHGPLFDHNS (87 aa)). Residues R311 and R316 each coordinate DNA.

Belongs to the RuvB family. In terms of assembly, homohexamer. Forms an RuvA(8)-RuvB(12)-Holliday junction (HJ) complex. HJ DNA is sandwiched between 2 RuvA tetramers; dsDNA enters through RuvA and exits via RuvB. An RuvB hexamer assembles on each DNA strand where it exits the tetramer. Each RuvB hexamer is contacted by two RuvA subunits (via domain III) on 2 adjacent RuvB subunits; this complex drives branch migration. In the full resolvosome a probable DNA-RuvA(4)-RuvB(12)-RuvC(2) complex forms which resolves the HJ.

It is found in the cytoplasm. The enzyme catalyses ATP + H2O = ADP + phosphate + H(+). Its function is as follows. The RuvA-RuvB-RuvC complex processes Holliday junction (HJ) DNA during genetic recombination and DNA repair, while the RuvA-RuvB complex plays an important role in the rescue of blocked DNA replication forks via replication fork reversal (RFR). RuvA specifically binds to HJ cruciform DNA, conferring on it an open structure. The RuvB hexamer acts as an ATP-dependent pump, pulling dsDNA into and through the RuvAB complex. RuvB forms 2 homohexamers on either side of HJ DNA bound by 1 or 2 RuvA tetramers; 4 subunits per hexamer contact DNA at a time. Coordinated motions by a converter formed by DNA-disengaged RuvB subunits stimulates ATP hydrolysis and nucleotide exchange. Immobilization of the converter enables RuvB to convert the ATP-contained energy into a lever motion, pulling 2 nucleotides of DNA out of the RuvA tetramer per ATP hydrolyzed, thus driving DNA branch migration. The RuvB motors rotate together with the DNA substrate, which together with the progressing nucleotide cycle form the mechanistic basis for DNA recombination by continuous HJ branch migration. Branch migration allows RuvC to scan DNA until it finds its consensus sequence, where it cleaves and resolves cruciform DNA. This is Holliday junction branch migration complex subunit RuvB from Chlorobaculum parvum (strain DSM 263 / NCIMB 8327) (Chlorobium vibrioforme subsp. thiosulfatophilum).